A 530-amino-acid polypeptide reads, in one-letter code: Putative ABC transporter ATP-binding protein SSO1893 (530 aa).

2 consecutive ABC transporter domains span residues 6 to 243 and 282 to 516; these read IRDL…LGLE and ILFA…EPPL. Residues 38–45 and 314–321 contribute to the ATP site; these read GRSGSGKS and GKNGSGKT.

The protein belongs to the ABC transporter superfamily.

It localises to the cell membrane. Its function is as follows. Probably part of an ABC transporter complex. Responsible for energy coupling to the transport system. The chain is Putative ABC transporter ATP-binding protein SSO1893 from Saccharolobus solfataricus (strain ATCC 35092 / DSM 1617 / JCM 11322 / P2) (Sulfolobus solfataricus).